The primary structure comprises 56 residues: UPF0434 protein CbuG_1535 (56 aa).

Belongs to the UPF0434 family.

This chain is UPF0434 protein CbuG_1535, found in Coxiella burnetii (strain CbuG_Q212) (Coxiella burnetii (strain Q212)).